We begin with the raw amino-acid sequence, 353 residues long: Melanin-concentrating hormone receptor 1 (353 aa).

The interval 1 to 29 (MDLEASLLPTGPNASNTSDGPDNLTSAGS) is disordered. The Extracellular portion of the chain corresponds to 1–44 (MDLEASLLPTGPNASNTSDGPDNLTSAGSPPRTGSISYINIIMP). The segment covering 12–29 (PNASNTSDGPDNLTSAGS) has biased composition (polar residues). Residues Asn13, Asn16, and Asn23 are each glycosylated (N-linked (GlcNAc...) asparagine). The chain crosses the membrane as a helical span at residues 45–67 (SVFGTICLLGIIGNSTVIFAVVK). At 68 to 79 (KSKLHWCNNVPD) the chain is on the cytoplasmic side. A helical membrane pass occupies residues 80-102 (IFIINLSVVDLLFLLGMPFMIHQ). Residues 103–116 (LMGNGVWHFGETMC) are Extracellular-facing. Cysteines 116 and 194 form a disulfide. A helical transmembrane segment spans residues 117–139 (TLITAMDANSQFTSTYILTAMAI). Over 140–158 (DRYLATVHPISSTKFRKPS) the chain is Cytoplasmic. A helical membrane pass occupies residues 159 to 181 (VATLVICLLWALSFISITPVWLY). Topologically, residues 182–209 (ARLIPFPGGAVGCGIRLPNPDTDLYWFT) are extracellular. A helical transmembrane segment spans residues 210–232 (LYQFFLAFALPFVVITAAYVRIL). Residues 233-252 (QRMTSSVAPASQRSIRLRTK) are Cytoplasmic-facing. Residues 253–275 (RVTRTAIAICLVFFVCWAPYYVL) form a helical membrane-spanning segment. The Extracellular portion of the chain corresponds to 276 to 289 (QLTQLSISRPTLTF). The helical transmembrane segment at 290 to 312 (VYLYNAAISLGYANSCLNPFVYI) threads the bilayer. The Cytoplasmic portion of the chain corresponds to 313-353 (VLCETFRKRLVLSVKPAAQGQLRAVSNAQTADEERTESKGT).

The protein belongs to the G-protein coupled receptor 1 family. Interacts with NCDN. As to expression, highest level in brain, particularly in the frontal cortex and hypothalamus, lower levels in the liver and heart.

The protein resides in the cell membrane. Functionally, receptor for melanin-concentrating hormone, coupled to both G proteins that inhibit adenylyl cyclase and G proteins that activate phosphoinositide hydrolysis. The polypeptide is Melanin-concentrating hormone receptor 1 (Homo sapiens (Human)).